The chain runs to 153 residues: Hsp90 co-chaperone HCH1 (153 aa).

It belongs to the AHA1 family. Monomer. Interacts with HSP82.

The protein localises to the cytoplasm. Its subcellular location is the nucleus. Co-chaperone that binds to the molecular chaperone HSP82 and stimulates its ATPase activity. Although not essential, it confers thermotolerance when intracellular levels of HSP82 are limiting. The polypeptide is Hsp90 co-chaperone HCH1 (HCH1) (Saccharomyces cerevisiae (strain ATCC 204508 / S288c) (Baker's yeast)).